Reading from the N-terminus, the 447-residue chain is N-succinylarginine dihydrolase (447 aa).

Residues 19-28, asparagine 110, and 137-138 contribute to the substrate site; these read AGLSFGNVAS and HR. The active site involves glutamate 174. Residue arginine 214 participates in substrate binding. The active site involves histidine 250. Residues aspartate 252 and asparagine 364 each contribute to the substrate site. The active-site Nucleophile is cysteine 370.

The protein belongs to the succinylarginine dihydrolase family. As to quaternary structure, homodimer.

It catalyses the reaction N(2)-succinyl-L-arginine + 2 H2O + 2 H(+) = N(2)-succinyl-L-ornithine + 2 NH4(+) + CO2. The protein operates within amino-acid degradation; L-arginine degradation via AST pathway; L-glutamate and succinate from L-arginine: step 2/5. Functionally, catalyzes the hydrolysis of N(2)-succinylarginine into N(2)-succinylornithine, ammonia and CO(2). This chain is N-succinylarginine dihydrolase, found in Idiomarina loihiensis (strain ATCC BAA-735 / DSM 15497 / L2-TR).